The chain runs to 319 residues: Cytochrome f (319 aa).

The N-terminal stretch at 1 to 34 (MQNRNTYEWAKKMTRLISVLVMIHIITRTSISNA) is a signal peptide. Residues Tyr35, Cys55, Cys58, and His59 each contribute to the heme site. Residues 287–304 (GLLLFLASVILAQIFLVL) traverse the membrane as a helical segment.

This sequence belongs to the cytochrome f family. As to quaternary structure, the 4 large subunits of the cytochrome b6-f complex are cytochrome b6, subunit IV (17 kDa polypeptide, petD), cytochrome f and the Rieske protein, while the 4 small subunits are PetG, PetL, PetM and PetN. The complex functions as a dimer. The cofactor is heme.

Its subcellular location is the plastid. The protein localises to the chloroplast thylakoid membrane. Component of the cytochrome b6-f complex, which mediates electron transfer between photosystem II (PSII) and photosystem I (PSI), cyclic electron flow around PSI, and state transitions. This is Cytochrome f (petA) from Pinus thunbergii (Japanese black pine).